The following is a 165-amino-acid chain: MELILLFFFLMALLVSLSSSSSISDGVFESQTSVSGRNLRHAKKKCEVNFEYMDYKVLTKRCKGPAFPAKECCSAFKEFACPYVSQINDMNSDCAQTMFSYMNIYGNYPTGLFANECRERKDGLVCPLPPLYSHNLNASTADSTPRFISLLISAATAVFALLVLT.

Positions 1-20 (MELILLFFFLMALLVSLSSS) are cleaved as a signal peptide. The interval 82–93 (PYVSQINDMNSD) is required for its function in pollen tube reception. A glycan (N-linked (GlcNAc...) asparagine) is linked at asparagine 137. Residue serine 139 is the site of GPI-anchor amidated serine attachment. The propeptide at 140–165 (TADSTPRFISLLISAATAVFALLVLT) is removed in mature form.

Interacts with FER. As to expression, expressed in leaves, buds, flowers and stems. Highest expression in the synergid cells of the female gametophyte.

It is found in the cell membrane. Female gametophyte-specific component of the signaling pathway required for fertilization. Required for reception of the pollen tube by the female gametophyte. Acts specifically at the synergid cell surface for pollen tube reception. Plays a role in double fertilization and early seed development. Component of the FER-regulated Rho GTPase signaling complex. Acts as a chaperone and coreceptor for FER. Required for localization of FER to the plasma membrane. This chain is GPI-anchored protein LORELEI (LRE), found in Arabidopsis thaliana (Mouse-ear cress).